A 432-amino-acid polypeptide reads, in one-letter code: Solute carrier family 38 member 8 (432 aa).

Transmembrane regions (helical) follow at residues Ala29–Phe49, Phe59–Ala79, Leu103–Ile123, Ala144–Leu164, Ile175–Trp195, Val215–Cys237, Leu253–Phe273, Ile292–Phe312, Leu345–Leu365, Ile368–Leu388, and Gly409–Val429.

It belongs to the amino acid/polyamine transporter 2 family. As to expression, expressed in neurons located in the gray matter. Highly expressed in thalamus, hypothalamus, amygdala and pons. Expressed in the CA3 area of hippocampus and in the Purkinje layer of the cerebellum (at protein level). Expressed in the eye.

Its subcellular location is the membrane. It localises to the cytoplasm. The protein resides in the cell cortex. The protein localises to the cell projection. It is found in the axon. It carries out the reaction L-glutamine(out) = L-glutamine(in). It catalyses the reaction L-alanine(in) = L-alanine(out). The enzyme catalyses L-histidine(out) = L-histidine(in). The catalysed reaction is L-aspartate(out) = L-aspartate(in). It carries out the reaction L-arginine(in) = L-arginine(out). It catalyses the reaction L-leucine(in) = L-leucine(out). In terms of biological role, electrogenic sodium-dependent amino acid transporter with a preference for L-glutamine, L-alanine, L-histidine, L-aspartate and L-arginine. May facilitate glutamine uptake in both excitatory and inhibitory neurons. The transport mechanism and stoichiometry remain to be elucidated. The sequence is that of Solute carrier family 38 member 8 from Mus musculus (Mouse).